A 1927-amino-acid polypeptide reads, in one-letter code: Integrin beta-like protein A (1927 aa).

A signal peptide spans 1–20 (MNRILTLFILFISLFIVCEA). At 21-1860 (THFRFGTMSW…KENNNKTVLT (1840 aa)) the chain is on the extracellular side. An N-linked (GlcNAc...) asparagine glycan is attached at Asn-309. The 38-residue stretch at 425–462 (YGEKCDPVDPCVNGESNEGSQGNGKCTCYYGWEGKNCD) folds into the EGF-like domain. 2 disulfides stabilise this stretch: Cys-435–Cys-450 and Cys-452–Cys-461. In terms of domain architecture, VWFA spans 522–709 (EVLVLVDSQP…VLSKAVVKAI (188 aa)). Asn-1122, Asn-1516, Asn-1717, Asn-1723, and Asn-1855 each carry an N-linked (GlcNAc...) asparagine glycan. Residues 1861–1881 (GAIAGAAAGAGLLAAGAWFLL) form a helical membrane-spanning segment. The Cytoplasmic segment spans residues 1882 to 1927 (KKSAPPTDAFFGEGAFADGAVSTNPMYEESGRSAINPLYEASSENL).

The protein belongs to the SIB family. As to quaternary structure, interacts with talA/talin.

Its subcellular location is the membrane. Implicated in cellular adhesion to substrate or phagocytic particles. The polypeptide is Integrin beta-like protein A (sibA) (Dictyostelium discoideum (Social amoeba)).